Reading from the N-terminus, the 187-residue chain is Crossover junction endodeoxyribonuclease RuvC (187 aa).

Residues D7, E67, and D140 contribute to the active site. Residues D7, E67, and D140 each contribute to the Mg(2+) site.

This sequence belongs to the RuvC family. Homodimer which binds Holliday junction (HJ) DNA. The HJ becomes 2-fold symmetrical on binding to RuvC with unstacked arms; it has a different conformation from HJ DNA in complex with RuvA. In the full resolvosome a probable DNA-RuvA(4)-RuvB(12)-RuvC(2) complex forms which resolves the HJ. Mg(2+) is required as a cofactor.

Its subcellular location is the cytoplasm. It catalyses the reaction Endonucleolytic cleavage at a junction such as a reciprocal single-stranded crossover between two homologous DNA duplexes (Holliday junction).. Functionally, the RuvA-RuvB-RuvC complex processes Holliday junction (HJ) DNA during genetic recombination and DNA repair. Endonuclease that resolves HJ intermediates. Cleaves cruciform DNA by making single-stranded nicks across the HJ at symmetrical positions within the homologous arms, yielding a 5'-phosphate and a 3'-hydroxyl group; requires a central core of homology in the junction. The consensus cleavage sequence is 5'-(A/T)TT(C/G)-3'. Cleavage occurs on the 3'-side of the TT dinucleotide at the point of strand exchange. HJ branch migration catalyzed by RuvA-RuvB allows RuvC to scan DNA until it finds its consensus sequence, where it cleaves and resolves the cruciform DNA. This is Crossover junction endodeoxyribonuclease RuvC from Chlorobium phaeobacteroides (strain DSM 266 / SMG 266 / 2430).